A 69-amino-acid chain; its full sequence is Neuropeptide-like protein 30 (69 aa).

The signal sequence occupies residues 1 to 22; it reads MISTSSILILVVLLACFMAASA. A tyrosine amide mark is found at Y29, Y39, Y46, and Y53. A tryptophan amide mark is found at W58 and W67.

It belongs to the YARP (YGGW-amide related peptide) family. Expressed in hypoderm.

It localises to the secreted. Functionally, may have antimicrobial activity. May play a role in response to fungal infection. The protein is Neuropeptide-like protein 30 (nlp-30) of Caenorhabditis elegans.